Here is a 197-residue protein sequence, read N- to C-terminus: dITP/XTP pyrophosphatase (197 aa).

9 to 14 serves as a coordination point for substrate; sequence TNNLNK. Residues glutamate 42 and aspartate 71 each contribute to the Mg(2+) site. Aspartate 71 serves as the catalytic Proton acceptor. Substrate-binding positions include serine 72, 153-156, lysine 176, and 181-182; these read FGYD and HR.

The protein belongs to the HAM1 NTPase family. In terms of assembly, homodimer. Requires Mg(2+) as cofactor.

It catalyses the reaction XTP + H2O = XMP + diphosphate + H(+). The enzyme catalyses dITP + H2O = dIMP + diphosphate + H(+). The catalysed reaction is ITP + H2O = IMP + diphosphate + H(+). Its function is as follows. Pyrophosphatase that catalyzes the hydrolysis of nucleoside triphosphates to their monophosphate derivatives, with a high preference for the non-canonical purine nucleotides XTP (xanthosine triphosphate), dITP (deoxyinosine triphosphate) and ITP. Seems to function as a house-cleaning enzyme that removes non-canonical purine nucleotides from the nucleotide pool, thus preventing their incorporation into DNA/RNA and avoiding chromosomal lesions. This is dITP/XTP pyrophosphatase from Leptospira interrogans serogroup Icterohaemorrhagiae serovar copenhageni (strain Fiocruz L1-130).